A 252-amino-acid polypeptide reads, in one-letter code: 5'-nucleotidase SurE (252 aa).

Asp-8, Asp-9, Ser-39, and Asn-91 together coordinate a divalent metal cation.

Belongs to the SurE nucleotidase family. A divalent metal cation serves as cofactor.

The protein resides in the cytoplasm. The enzyme catalyses a ribonucleoside 5'-phosphate + H2O = a ribonucleoside + phosphate. In terms of biological role, nucleotidase that shows phosphatase activity on nucleoside 5'-monophosphates. This is 5'-nucleotidase SurE from Legionella pneumophila (strain Lens).